Reading from the N-terminus, the 516-residue chain is Bifunctional pantoate ligase/cytidylate kinase (516 aa).

The segment at 1-279 (MVRKIFQTNA…CGSTRLIDHT (279 aa)) is pantoate--beta-alanine ligase. 29–36 (MGGLHPGH) provides a ligand contact to ATP. Histidine 36 (proton donor) is an active-site residue. Glutamine 64 provides a ligand contact to (R)-pantoate. Glutamine 64 contributes to the beta-alanine binding site. ATP is bound at residue 153–156 (GEKD). Glutamine 159 serves as a coordination point for (R)-pantoate. Residue 190–193 (YSSR) participates in ATP binding. Positions 280–516 (FLMHRKPIIA…PEEVWPTPNS (237 aa)) are cytidylate kinase.

In the N-terminal section; belongs to the pantothenate synthetase family. It in the C-terminal section; belongs to the cytidylate kinase family. Type 1 subfamily.

The protein resides in the cytoplasm. The enzyme catalyses (R)-pantoate + beta-alanine + ATP = (R)-pantothenate + AMP + diphosphate + H(+). The catalysed reaction is CMP + ATP = CDP + ADP. It catalyses the reaction dCMP + ATP = dCDP + ADP. The protein operates within cofactor biosynthesis; (R)-pantothenate biosynthesis; (R)-pantothenate from (R)-pantoate and beta-alanine: step 1/1. Its function is as follows. Catalyzes the condensation of pantoate with beta-alanine in an ATP-dependent reaction via a pantoyl-adenylate intermediate. Catalyzes the transfer of a phosphate group from ATP to either CMP or dCMP to form CDP or dCDP and ADP, respectively. This is Bifunctional pantoate ligase/cytidylate kinase from Prochlorococcus marinus (strain NATL1A).